The primary structure comprises 205 residues: Molybdenum cofactor guanylyltransferase (205 aa).

Residues 14-16 (LAG), lysine 27, aspartate 77, and aspartate 107 each bind GTP. Aspartate 107 serves as a coordination point for Mg(2+).

The protein belongs to the MobA family. Monomer. The cofactor is Mg(2+).

Its subcellular location is the cytoplasm. The enzyme catalyses Mo-molybdopterin + GTP + H(+) = Mo-molybdopterin guanine dinucleotide + diphosphate. Functionally, transfers a GMP moiety from GTP to Mo-molybdopterin (Mo-MPT) cofactor (Moco or molybdenum cofactor) to form Mo-molybdopterin guanine dinucleotide (Mo-MGD) cofactor. The polypeptide is Molybdenum cofactor guanylyltransferase (Burkholderia ambifaria (strain MC40-6)).